A 132-amino-acid polypeptide reads, in one-letter code: uncharacterized protein (132 aa).

The disordered stretch occupies residues 39-93 (HPAGASEALGALPPPRQLVEKRRVSPPRRLDQSGRDGGAVAKCSLSRGLSPPGWT). Residues 56-72 (LVEKRRVSPPRRLDQSG) show a composition bias toward basic and acidic residues.

This is an uncharacterized protein from Homo sapiens (Human).